Here is a 749-residue protein sequence, read N- to C-terminus: 5-methyltetrahydropteroyltriglutamate--homocysteine methyltransferase (749 aa).

5-methyltetrahydropteroyltri-L-glutamate-binding positions include 15 to 18 (RELK) and K114. L-homocysteine contacts are provided by residues 425-427 (IGS) and E478. L-methionine contacts are provided by residues 425–427 (IGS) and E478. W555 lines the 5-methyltetrahydropteroyltri-L-glutamate pocket. L-homocysteine is bound at residue D593. An L-methionine-binding site is contributed by D593. E599 is a 5-methyltetrahydropteroyltri-L-glutamate binding site. Zn(2+) is bound by residues H636, C638, and E660. H689 serves as the catalytic Proton donor. A Zn(2+)-binding site is contributed by C721.

Belongs to the vitamin-B12 independent methionine synthase family. Requires Zn(2+) as cofactor.

The catalysed reaction is 5-methyltetrahydropteroyltri-L-glutamate + L-homocysteine = tetrahydropteroyltri-L-glutamate + L-methionine. The protein operates within amino-acid biosynthesis; L-methionine biosynthesis via de novo pathway; L-methionine from L-homocysteine (MetE route): step 1/1. Its function is as follows. Catalyzes the transfer of a methyl group from 5-methyltetrahydrofolate to homocysteine resulting in methionine formation. The sequence is that of 5-methyltetrahydropteroyltriglutamate--homocysteine methyltransferase from Streptococcus suis (strain 05ZYH33).